Reading from the N-terminus, the 456-residue chain is Dolichyl-diphosphooligosaccharide--protein glycosyltransferase 48 kDa subunit (456 aa).

The signal sequence occupies residues Met1 to Ala42. The Lumenal portion of the chain corresponds to Ser43–Pro427. A helical membrane pass occupies residues Tyr428–Leu447. The Cytoplasmic segment spans residues His448–Asp456.

The protein belongs to the DDOST 48 kDa subunit family. Component of the oligosaccharyltransferase (OST) complex. OST exists in two different complex forms which contain common core subunits RPN1, RPN2, OST48, OST4, DAD1 and TMEM258, either STT3A or STT3B as catalytic subunits, and form-specific accessory subunits. STT3A complex assembly occurs through the formation of 3 subcomplexes. Subcomplex 1 contains RPN1 and TMEM258, subcomplex 2 contains the STT3A-specific subunits STT3A, DC2/OSTC, and KCP2 as well as the core subunit OST4, and subcomplex 3 contains RPN2, DAD1, and OST48. The STT3A complex can form stable complexes with the Sec61 complex or with both the Sec61 and TRAP complexes. Interacts with SMIM22.

The protein resides in the endoplasmic reticulum membrane. It functions in the pathway protein modification; protein glycosylation. Functionally, subunit of the oligosaccharyl transferase (OST) complex that catalyzes the initial transfer of a defined glycan (Glc(3)Man(9)GlcNAc(2) in eukaryotes) from the lipid carrier dolichol-pyrophosphate to an asparagine residue within an Asn-X-Ser/Thr consensus motif in nascent polypeptide chains, the first step in protein N-glycosylation. N-glycosylation occurs cotranslationally and the complex associates with the Sec61 complex at the channel-forming translocon complex that mediates protein translocation across the endoplasmic reticulum (ER). All subunits are required for a maximal enzyme activity. Required for the assembly of both SST3A- and SS3B-containing OST complexes. The chain is Dolichyl-diphosphooligosaccharide--protein glycosyltransferase 48 kDa subunit from Homo sapiens (Human).